The primary structure comprises 242 residues: Outer membrane protein class 4 (242 aa).

Positions 1-22 (MTKQLKLSALFVALLASGTAVA) are cleaved as a signal peptide. 7 tandem repeats follow at residues 69–70 (AP), 71–72 (EP), 73–74 (EP), 75–76 (EP), 77–78 (EP), 79–80 (AP), and 81–82 (AP). The interval 69-82 (APEPEPEPEPAPAP) is 7 X 2 AA tandem repeats of X-P. The 138-residue stretch at 92-229 (YVDETISLSA…RVDVKIRSIV (138 aa)) folds into the OmpA-like domain. An intrachain disulfide couples Cys191 to Cys214.

It belongs to the outer membrane OOP (TC 1.B.6) superfamily.

The protein resides in the cell outer membrane. The chain is Outer membrane protein class 4 (rmpM) from Neisseria meningitidis serogroup A / serotype 4A (strain DSM 15465 / Z2491).